Here is a 997-residue protein sequence, read N- to C-terminus: Translation initiation factor IF-2 (997 aa).

A disordered region spans residues 36–415; sequence SMAGSLTTEE…ATQPLKAAKR (380 aa). 2 stretches are compositionally biased toward basic and acidic residues: residues 45–65 and 94–107; these read EAAR…ERSG and AREE…EKPA. A compositionally biased stretch (low complexity) spans 108–126; the sequence is AVEAPAQAEPVAEAPAASP. Residues 127 to 147 are compositionally biased toward basic and acidic residues; that stretch reads HKVEEKAAPEAAKAEPAEKAK. Residues 151-162 show a composition bias toward low complexity; the sequence is ARVVSAARVISR. The segment covering 163–181 has biased composition (basic and acidic residues); it reads PGEEEEKKPEPVVESKPEP. The segment covering 182–196 has biased composition (low complexity); it reads VAEISPVAAALAARE. Composition is skewed to basic and acidic residues over residues 197 to 214 and 241 to 252; these read AAAR…EKGA and PEARTEAWKDAD. The segment covering 300 to 309 has biased composition (gly residues); the sequence is GRPGAPGGPR. The segment covering 316-335 has biased composition (pro residues); sequence PPRPGGPRPSGPGGPRPAGG. Residues 378–388 show a composition bias toward basic and acidic residues; sequence GGRRDDDDSQR. A compositionally biased stretch (basic residues) spans 390–399; sequence NRGKGRRKGG. Residues 496–665 form the tr-type G domain; that stretch reads PRPPVVTIMG…ALQSEIMELK (170 aa). Residues 505-512 form a G1 region; the sequence is GHVDHGKT. Residue 505–512 participates in GTP binding; it reads GHVDHGKT. The tract at residues 530-534 is G2; that stretch reads GITQH. Residues 551 to 554 form a G3 region; it reads DTPG. GTP contacts are provided by residues 551–555 and 605–608; these read DTPGH and NKMD. Residues 605–608 form a G4 region; the sequence is NKMD. The G5 stretch occupies residues 641 to 643; sequence AAK.

The protein belongs to the TRAFAC class translation factor GTPase superfamily. Classic translation factor GTPase family. IF-2 subfamily.

Its subcellular location is the cytoplasm. One of the essential components for the initiation of protein synthesis. Protects formylmethionyl-tRNA from spontaneous hydrolysis and promotes its binding to the 30S ribosomal subunits. Also involved in the hydrolysis of GTP during the formation of the 70S ribosomal complex. The polypeptide is Translation initiation factor IF-2 (Desulfovibrio desulfuricans (strain ATCC 27774 / DSM 6949 / MB)).